The sequence spans 81 residues: Photosystem I iron-sulfur center (81 aa).

4Fe-4S ferredoxin-type domains lie at Ser-2–Trp-31 and Gly-37–Tyr-68. [4Fe-4S] cluster contacts are provided by Cys-11, Cys-14, Cys-17, Cys-21, Cys-48, Cys-51, Cys-54, and Cys-58.

The cyanobacterial PSI reaction center is composed of one copy each of PsaA,B,C,D,E,F,I,J,K,L,M and X, and forms trimeric complexes. The cofactor is [4Fe-4S] cluster.

It localises to the cellular thylakoid membrane. It catalyses the reaction reduced [plastocyanin] + hnu + oxidized [2Fe-2S]-[ferredoxin] = oxidized [plastocyanin] + reduced [2Fe-2S]-[ferredoxin]. Functionally, apoprotein for the two 4Fe-4S centers FA and FB of photosystem I (PSI); essential for photochemical activity. FB is the terminal electron acceptor of PSI, donating electrons to ferredoxin. The C-terminus interacts with PsaA/B/D and helps assemble the protein into the PSI complex. Required for binding of PsaD and PsaE to PSI. PSI is a plastocyanin/cytochrome c6-ferredoxin oxidoreductase, converting photonic excitation into a charge separation, which transfers an electron from the donor P700 chlorophyll pair to the spectroscopically characterized acceptors A0, A1, FX, FA and FB in turn. The sequence is that of Photosystem I iron-sulfur center from Synechococcus sp. (strain WH7803).